The sequence spans 119 residues: Large ribosomal subunit protein P3z (119 aa).

Gly residues predominate over residues alanine 79–glycine 90. The interval alanine 79–glycine 119 is disordered. The segment covering proline 96–glutamate 105 has biased composition (basic and acidic residues).

It belongs to the eukaryotic ribosomal protein P1/P2 family. Phosphorylated.

Plays an important role in the elongation step of protein synthesis. This Arabidopsis thaliana (Mouse-ear cress) protein is Large ribosomal subunit protein P3z (RPP3A).